We begin with the raw amino-acid sequence, 552 residues long: 4-coumarate--CoA ligase-like 3 (552 aa).

Ser-207, Ser-208, Gly-209, Thr-210, Thr-211, and Lys-215 together coordinate ATP. (E)-4-coumaroyl-AMP is bound at residue Phe-252. A CoA-binding site is contributed by Arg-273. An SBD1 region spans residues 275–346 (GLDDMMQAVE…EKYPTVNIFQ (72 aa)). (E)-4-coumaroyl-AMP-binding residues include Gly-324, Gln-346, Gly-347, and Thr-351. ATP contacts are provided by Gln-346, Gly-347, Thr-351, Asp-432, and Arg-447. The tract at residues 347–411 (GYALTESHGS…LKGPSISKGY (65 aa)) is SBD2. Residues Lys-449 and Lys-453 each coordinate (E)-4-coumaroyl-AMP. The CoA site is built by Lys-455 and Gly-456. Lys-538 contributes to the ATP binding site. The Microbody targeting signal signature appears at 550–552 (SKL).

This sequence belongs to the ATP-dependent AMP-binding enzyme family. Mg(2+) is required as a cofactor.

Its subcellular location is the peroxisome. The catalysed reaction is (E)-4-coumarate + ATP + CoA = (E)-4-coumaroyl-CoA + AMP + diphosphate. The enzyme catalyses (E)-4-coumarate + ATP + H(+) = (E)-4-coumaroyl-AMP + diphosphate. It catalyses the reaction (E)-4-coumaroyl-AMP + CoA = (E)-4-coumaroyl-CoA + AMP + H(+). In terms of biological role, carboxylate--CoA ligase that may use 4-coumarate as substrate. Follows a two-step reaction mechanism, wherein the carboxylate substrate first undergoes adenylation by ATP, followed by a thioesterification in the presence of CoA to yield the final CoA thioester. This Arabidopsis thaliana (Mouse-ear cress) protein is 4-coumarate--CoA ligase-like 3.